A 138-amino-acid polypeptide reads, in one-letter code: Small ribosomal subunit protein uS11c (138 aa).

Residues 1-22 (MAKLLPRIGSRKNGRISSRKNA) are disordered. The span at 9–22 (GSRKNGRISSRKNA) shows a compositional bias: basic residues.

Belongs to the universal ribosomal protein uS11 family. Part of the 30S ribosomal subunit.

It is found in the plastid. Its subcellular location is the chloroplast. The protein is Small ribosomal subunit protein uS11c of Populus alba (White poplar).